A 438-amino-acid chain; its full sequence is Gamma-glutamyl phosphate reductase (438 aa).

Belongs to the gamma-glutamyl phosphate reductase family.

Its subcellular location is the cytoplasm. The enzyme catalyses L-glutamate 5-semialdehyde + phosphate + NADP(+) = L-glutamyl 5-phosphate + NADPH + H(+). It participates in amino-acid biosynthesis; L-proline biosynthesis; L-glutamate 5-semialdehyde from L-glutamate: step 2/2. Functionally, catalyzes the NADPH-dependent reduction of L-glutamate 5-phosphate into L-glutamate 5-semialdehyde and phosphate. The product spontaneously undergoes cyclization to form 1-pyrroline-5-carboxylate. This is Gamma-glutamyl phosphate reductase from Prochlorococcus marinus (strain NATL1A).